A 445-amino-acid chain; its full sequence is Adenylosuccinate synthetase (445 aa).

GTP contacts are provided by residues 12-18 (GDEGKGK) and 40-42 (GHT). Aspartate 13 functions as the Proton acceptor in the catalytic mechanism. The Mg(2+) site is built by aspartate 13 and glycine 40. IMP-binding positions include 13–16 (DEGK), 38–41 (NAGH), threonine 128, arginine 142, glutamine 223, threonine 238, and arginine 302. The active-site Proton donor is histidine 41. 298-304 (TTTGRKR) contributes to the substrate binding site. GTP contacts are provided by residues arginine 304, 330-332 (KLD), and 411-413 (SLG).

It belongs to the adenylosuccinate synthetase family. As to quaternary structure, homodimer. Mg(2+) serves as cofactor.

Its subcellular location is the cytoplasm. The enzyme catalyses IMP + L-aspartate + GTP = N(6)-(1,2-dicarboxyethyl)-AMP + GDP + phosphate + 2 H(+). It participates in purine metabolism; AMP biosynthesis via de novo pathway; AMP from IMP: step 1/2. In terms of biological role, plays an important role in the de novo pathway of purine nucleotide biosynthesis. Catalyzes the first committed step in the biosynthesis of AMP from IMP. This Cyanothece sp. (strain PCC 7425 / ATCC 29141) protein is Adenylosuccinate synthetase.